Reading from the N-terminus, the 441-residue chain is GTPase Der (441 aa).

2 EngA-type G domains span residues 4-168 and 177-352; these read PVVA…PEDI and IRIA…EQNS. GTP contacts are provided by residues 10–17, 57–61, 121–124, 183–190, 230–234, and 295–298; these read GRPNVGKS, DTGGI, NKVE, DTAGM, and NKWD. One can recognise a KH-like domain in the interval 353–437; sequence TRVATATLNT…PIRMIVRQKD (85 aa).

Belongs to the TRAFAC class TrmE-Era-EngA-EngB-Septin-like GTPase superfamily. EngA (Der) GTPase family. In terms of assembly, associates with the 50S ribosomal subunit.

GTPase that plays an essential role in the late steps of ribosome biogenesis. This Desulfitobacterium hafniense (strain Y51) protein is GTPase Der.